The primary structure comprises 675 residues: MNPYQNKNEYEIFNAPSNGFSKSNNYSRYPLANKPNQPLKNTNYKDWLNVCQDNQQYGNNAGNFASSETIVGVSAGIIVVGTMLGAFAAPVLAAGIISFGTLLPIFWQGSDPANVWQDLLNIGGRPIQEIDKNIINVLTSIVTPIKNQLDKYQEFFDKWEPARTHANAKAVHDLFTTLEPIIDKDLDMLKNNASYRIPTLPAYAQIATWHLNLLKHAATYYNIWLQNQGINPSTFNSSNYYQGYLKRKIQEYTDYCIQTYNAGLTMIRTNTNATWNMYNTYRLEMTLTVLDLIAIFPNYDPEKYPIGVKSELIREVYTNVNSDTFRTITELENGLTRNPTLFTWINQGRFYTRNSRDILDPYDIFSFTGNQMAFTHTNDDRNIIWGAVHGNIISQDTSKVFPFYRNKPIDKVEIVRHREYSDIIYEMIFFSNSSEVFRYSSNSTIENNYKRTDSYMIPKQTWKNEEYGHTLSYIKTDNYIFSVVRERRRVAFSWTHTSVDFQNTIDLDNITQIHALKALKVSSDSKIVKGPGHTGGDLVILKDSMDFRVRFLKNVSRQYQVRIRYATNAPKTTVFLTGIDTISVELPSTTSRQNPNATDLTYADFGYVTFPRTVPNKTFEGEDTLLMTLYGTPNHSYNIYIDKIEFIPITQSVLDYTEKQNIEKTQKIVNDLFVN.

It belongs to the delta endotoxin family.

In terms of biological role, promotes colloidosmotic lysis by binding to the midgut epithelial cells of mosquitos. Active on Aedes aegypti. This Bacillus thuringiensis subsp. israelensis protein is Pesticidal crystal protein Cry10Aa (cry10Aa).